The sequence spans 295 residues: Putative aquaporin-12B (295 aa).

Topologically, residues Met1 to Arg22 are cytoplasmic. Residues Arg23–Ala41 form a helical membrane-spanning segment. The Extracellular segment spans residues Met42 to Phe55. Residues Gly56 to Thr74 traverse the membrane as a helical segment. Over Leu75 to Asp76 the chain is Cytoplasmic. Positions Gly77 to Cys114 form an intramembrane region, discontinuously helical. The NPA 1 motif lies at Asn81 to Thr83. At Thr115 to Cys120 the chain is on the cytoplasmic side. The chain crosses the membrane as a helical span at residues Trp121–Ala142. Residues Leu143–Thr145 are Extracellular-facing. The helical transmembrane segment at Ser146–Leu166 threads the bilayer. Residues His167–Ala174 are Cytoplasmic-facing. Residues Tyr175–Ala191 traverse the membrane as a helical segment. At Gly192–Phe194 the chain is on the extracellular side. Positions Thr195 to Ser206 form an intramembrane region, discontinuously helical. The NPA 2 signature appears at Asn200–Ala202. The Extracellular segment spans residues Val207–Tyr223. Residues Trp224–His244 traverse the membrane as a helical segment. Residues Leu245 to Ser295 lie on the Cytoplasmic side of the membrane. A disordered region spans residues Lys257–Ser295.

The protein belongs to the MIP/aquaporin (TC 1.A.8) family. AQP11/AQP12 subfamily. Homotetramer; each monomer provides an independent water pore.

Its subcellular location is the membrane. It catalyses the reaction H2O(in) = H2O(out). In terms of biological role, putative aquaporin. Could form homotetrameric transmembrane channels, with each monomer independently mediating water transport across the plasma membrane along its osmotic gradient. In Homo sapiens (Human), this protein is Putative aquaporin-12B.